We begin with the raw amino-acid sequence, 458 residues long: uncharacterized protein (458 aa).

It belongs to the MG032/MG096/MG288 family.

This is an uncharacterized protein from Mycoplasma pneumoniae (strain ATCC 29342 / M129 / Subtype 1) (Mycoplasmoides pneumoniae).